The chain runs to 778 residues: Endonuclease MutS2 (778 aa).

Position 328 to 335 (328 to 335 (GPNTGGKT)) interacts with ATP. One can recognise a Smr domain in the interval 702–777 (LDLRGKRYEE…GSGATIVTFK (76 aa)).

Belongs to the DNA mismatch repair MutS family. MutS2 subfamily. Homodimer. Binds to stalled ribosomes, contacting rRNA.

Endonuclease that is involved in the suppression of homologous recombination and thus may have a key role in the control of bacterial genetic diversity. In terms of biological role, acts as a ribosome collision sensor, splitting the ribosome into its 2 subunits. Detects stalled/collided 70S ribosomes which it binds and splits by an ATP-hydrolysis driven conformational change. Acts upstream of the ribosome quality control system (RQC), a ribosome-associated complex that mediates the extraction of incompletely synthesized nascent chains from stalled ribosomes and their subsequent degradation. Probably generates substrates for RQC. The sequence is that of Endonuclease MutS2 from Streptococcus pneumoniae (strain P1031).